We begin with the raw amino-acid sequence, 351 residues long: Short-chain dehydrogenase sdnK (351 aa).

The NADP(+) site is built by Ile46, Thr66, Glu98, Tyr224, Lys228, and Thr268. The Proton donor role is filled by Tyr224. Lys228 serves as the catalytic Lowers pKa of active site Tyr.

The protein belongs to the short-chain dehydrogenases/reductases (SDR) family.

The protein operates within antibiotic biosynthesis. Its function is as follows. Short-chain dehydrogenase; part of the gene cluster that mediates the biosynthesis of sordarin and hypoxysordarin, glycoside antibiotics with a unique tetracyclic diterpene aglycone structure. First, the geranylgeranyl diphosphate synthase sdnC constructs GGDP from farnesyl diphosphate and isopentenyl diphosphate. The diterpene cyclase sdnA then catalyzes the cyclization of GGDP to afford cycloaraneosene. Cycloaraneosene is then hydroxylated four times by the putative cytochrome P450 monooxygenases sdnB, sdnE, sdnF and sdnH to give a hydroxylated cycloaraneosene derivative such as cycloaraneosene-8,9,13,19-tetraol. Although the order of the hydroxylations is unclear, at least C8, C9 and C13 of the cycloaraneosene skeleton are hydroxylated before the sordaricin formation. Dehydration of the 13-hydroxy group of the hydroxylated cycloaraneosene derivative might be catalyzed by an unassigned hypothetical protein such as sdnG and sdnP to construct the cyclopentadiene moiety. The FAD-dependent oxidoreductase sdnN is proposed to catalyze the oxidation at C9 of the hydroxylated cycloaraneosene derivative and also catalyze the Baeyer-Villiger oxidation to give the lactone intermediate. The presumed lactone intermediate would be hydrolyzed to give an acrolein moiety and a carboxylate moiety. Then, [4+2]cycloaddition would occur between the acrolein moiety and the cyclopentadiene moiety to give sordaricin. SdnN might also be involved in the [4+2]cycloaddition after the hypothesized oxidation to accommodate the oxidized product and prompt the [4+2]cycloaddition. GDP-6-deoxy-D-altrose may be biosynthesized from GDP-D-mannose by the putative GDP-mannose-4,6-dehydratase sdnI and the short-chain dehydrogenase sdnK. The glycosyltransferase sdnJ catalyzes the attachment of 6-deoxy-D-altrose onto the 19-hydroxy group of sordaricin to give 4'-O-demethylsordarin. The methyltransferase sdnD would complete the biosynthesis of sordarin. Sordarin can be further modified into hypoxysordarin. The unique acyl chain at the 3'-hydroxy group of hypoxysordarin would be constructed by an iterative type I PKS sdnO and the trans-acting polyketide methyltransferase sdnL. SdnL would be responsible for the introduction of an alpha-methyl group of the polyketide chain. Alternatively, the beta-lactamase-like protein sdnR might be responsible for the cleavage and transfer of the polyketide chain from the PKS sdnO to sordarin. Two putative cytochrome P450 monooxygenases, sdnQ and sdnT, might catalyze the epoxidations of the polyketide chain to complete the biosynthesis of hypoxysordarin. Transcriptional regulators sdnM and sdnS are presumably encoded for the transcriptional regulation of the expression of the sdn gene cluster. This Sordaria araneosa (Pleurage araneosa) protein is Short-chain dehydrogenase sdnK.